The sequence spans 452 residues: Phosphoglucosamine mutase (452 aa).

The active-site Phosphoserine intermediate is the Ser98. Positions 98, 239, 241, and 243 each coordinate Mg(2+). Ser98 carries the post-translational modification Phosphoserine.

The protein belongs to the phosphohexose mutase family. The cofactor is Mg(2+). Activated by phosphorylation.

It carries out the reaction alpha-D-glucosamine 1-phosphate = D-glucosamine 6-phosphate. Functionally, catalyzes the conversion of glucosamine-6-phosphate to glucosamine-1-phosphate. The chain is Phosphoglucosamine mutase from Anaplasma marginale (strain St. Maries).